The following is a 493-amino-acid chain: Glycylpeptide N-tetradecanoyltransferase (493 aa).

Histidine 45–tryptophan 48 serves as a coordination point for tetradecanoyl-CoA. Residues valine 53–proline 73 are disordered. Residues leucine 182–valine 184 and serine 190–alanine 194 each bind tetradecanoyl-CoA. Leucine 493 (proton acceptor; via carboxylate) is an active-site residue.

It belongs to the NMT family. Monomer.

It localises to the cytoplasm. The enzyme catalyses N-terminal glycyl-[protein] + tetradecanoyl-CoA = N-tetradecanoylglycyl-[protein] + CoA + H(+). Adds a myristoyl group to the N-terminal glycine residue of certain cellular proteins. In Cryptococcus neoformans var. neoformans serotype D (strain B-3501A) (Filobasidiella neoformans), this protein is Glycylpeptide N-tetradecanoyltransferase.